The primary structure comprises 339 residues: uncharacterized protein (339 aa).

Position 28 to 35 (28 to 35) interacts with ATP; the sequence is GPINSGKT.

Belongs to the archaeal ATPase family.

This is an uncharacterized protein from Pyrococcus abyssi (strain GE5 / Orsay).